A 562-amino-acid chain; its full sequence is Formate--tetrahydrofolate ligase (562 aa).

An ATP-binding site is contributed by 71–78 (TPAGEGKS).

This sequence belongs to the formate--tetrahydrofolate ligase family.

The enzyme catalyses (6S)-5,6,7,8-tetrahydrofolate + formate + ATP = (6R)-10-formyltetrahydrofolate + ADP + phosphate. It functions in the pathway one-carbon metabolism; tetrahydrofolate interconversion. This chain is Formate--tetrahydrofolate ligase, found in Bacillus cereus (strain ATCC 10987 / NRS 248).